The primary structure comprises 46 residues: Acetylajmalan esterase (46 aa).

N-linked (GlcNAc...) asparagine glycosylation is present at N39.

This sequence belongs to the 'GDSL' lipolytic enzyme family.

It catalyses the reaction 17-O-acetylajmaline + H2O = ajmaline + acetate + H(+). It carries out the reaction 17-O-acetylnorajmaline + H2O = norajmaline + acetate + H(+). Its function is as follows. Deacetylates 17-O-acetylajmaline and 17-O-acetylnorajmaline, but is inactive toward other acetylated alkaloids. The polypeptide is Acetylajmalan esterase (Rauvolfia verticillata (Common devil-pepper)).